Reading from the N-terminus, the 135-residue chain is DNA-directed RNA polymerase subunit omega (135 aa).

It belongs to the RNA polymerase subunit omega family. In terms of assembly, the RNAP catalytic core consists of 2 alpha, 1 beta, 1 beta' and 1 omega subunit. When a sigma factor is associated with the core the holoenzyme is formed, which can initiate transcription.

The catalysed reaction is RNA(n) + a ribonucleoside 5'-triphosphate = RNA(n+1) + diphosphate. Its function is as follows. Promotes RNA polymerase assembly. Latches the N- and C-terminal regions of the beta' subunit thereby facilitating its interaction with the beta and alpha subunits. This Sinorhizobium medicae (strain WSM419) (Ensifer medicae) protein is DNA-directed RNA polymerase subunit omega.